Here is a 603-residue protein sequence, read N- to C-terminus: Rab proteins geranylgeranyltransferase component A (603 aa).

Ser470 is subject to Phosphoserine.

This sequence belongs to the Rab GDI family.

In terms of biological role, substrate-binding subunit (component A) of the Rab geranylgeranyltransferase (GGTase) complex. Binds unprenylated Rab proteins and presents the substrate peptide to the catalytic component B. The component A is thought to be regenerated by transferring its prenylated Rab back to the donor membrane. In Saccharomyces cerevisiae (strain ATCC 204508 / S288c) (Baker's yeast), this protein is Rab proteins geranylgeranyltransferase component A (MRS6).